Reading from the N-terminus, the 153-residue chain is Cofilin (153 aa).

One can recognise an ADF-H domain in the interval 4–148; that stretch reads SGATVSQDCI…EYDSILKTVS (145 aa).

The protein belongs to the actin-binding proteins ADF family.

It is found in the cytoplasm. It localises to the cytoskeleton. The protein localises to the nucleus matrix. Controls reversibly actin polymerization and depolymerization in a pH-sensitive manner. It has the ability to bind G- and F-actin in a 1:1 ratio of cofilin to actin. Binding to F-actin is regulated by tropomyosin. It is the major component of intranuclear and cytoplasmic actin rods. Required for accumulation of actin at the cell division site via depolymerizing actin at the cell ends. In association with myosin II has a role in the assembly of the contractile ring via severing actin filaments. Involved in the maintenance of the contractile ring once formed. In association with profilin and capping protein, has a role in the mitotic reorganization of the actin cytoskeleton. The protein is Cofilin (COF1) of Gibberella zeae (strain ATCC MYA-4620 / CBS 123657 / FGSC 9075 / NRRL 31084 / PH-1) (Wheat head blight fungus).